We begin with the raw amino-acid sequence, 380 residues long: Kappa-type opioid receptor (380 aa).

Topologically, residues M1–V57 are extracellular. N-linked (GlcNAc...) asparagine glycans are attached at residues N25 and N39. A helical membrane pass occupies residues I58–I85. Over R86–N95 the chain is Cytoplasmic. The helical transmembrane segment at I96–Y119 threads the bilayer. The Extracellular portion of the chain corresponds to L120–K132. Residues C131 and C210 are joined by a disulfide bond. Residues V133 to V154 form a helical membrane-spanning segment. Topologically, residues D155–L173 are cytoplasmic. The helical transmembrane segment at K174 to L196 threads the bilayer. Residues G197–W222 lie on the Extracellular side of the membrane. The helical transmembrane segment at D223–T247 threads the bilayer. The Cytoplasmic segment spans residues L248–R274. A helical transmembrane segment spans residues L275–V296. Residues E297–S311 are Extracellular-facing. The chain crosses the membrane as a helical span at residues Y312–L333. The Cytoplasmic portion of the chain corresponds to D334–V380. Residue C345 is the site of S-palmitoyl cysteine attachment.

This sequence belongs to the G-protein coupled receptor 1 family. Interacts with NHERF1. Interacts with GABARAPL1.

The protein resides in the cell membrane. G-protein coupled opioid receptor that functions as a receptor for endogenous alpha-neoendorphins and dynorphins, but has low affinity for beta-endorphins. Also functions as a receptor for various synthetic opioids and for the psychoactive diterpene salvinorin A. Ligand binding causes a conformation change that triggers signaling via guanine nucleotide-binding proteins (G proteins) and modulates the activity of down-stream effectors, such as adenylate cyclase. Signaling leads to the inhibition of adenylate cyclase activity. Inhibits neurotransmitter release by reducing calcium ion currents and increasing potassium ion conductance. Plays a role in the perception of pain. Plays a role in mediating reduced physical activity upon treatment with synthetic opioids. Plays a role in the regulation of salivation in response to synthetic opioids. May play a role in arousal and regulation of autonomic and neuroendocrine functions. This chain is Kappa-type opioid receptor (OPRK1), found in Bos taurus (Bovine).